The following is a 386-amino-acid chain: MAPDPIALARDLIRCPSVTPADAGALDRVQSVLEGLGFTCHRLPFQEPGTERVDNLYARLGDKGPNFCFAGHTDVVPAGDAAAWTVDPFGGEIIDGRLYGRGAADMKGGVAAFIAAVGSFLERNGPPAGSISLLITGDEEGPAVNGTRKVLDWMAAAGERIDACLVGEPTNPRALGDMIKVGRRGSLTATLTALGAQGHTAYPHLADNPLPRLAEALHLLASSPLDMGTPHFQPSTLALTSIDVGNPASNVIPARGTARFNIRFNDLHTPESLEAHIRDVLEEVGGAWELALQTSGVAFLTPPGALSDIVAAAVEAHTGRTPELSTSGGTSDARFIKDHCPVVEFGLVGASMHKVDENVAVADLLELTAIYRTVLERWFAGAEPRT.

Residue H72 participates in Zn(2+) binding. D74 is a catalytic residue. D105 contacts Zn(2+). Catalysis depends on E139, which acts as the Proton acceptor. Residues E140, E168, and H353 each coordinate Zn(2+).

The protein belongs to the peptidase M20A family. DapE subfamily. As to quaternary structure, homodimer. Zn(2+) is required as a cofactor. The cofactor is Co(2+).

The enzyme catalyses N-succinyl-(2S,6S)-2,6-diaminopimelate + H2O = (2S,6S)-2,6-diaminopimelate + succinate. The protein operates within amino-acid biosynthesis; L-lysine biosynthesis via DAP pathway; LL-2,6-diaminopimelate from (S)-tetrahydrodipicolinate (succinylase route): step 3/3. Catalyzes the hydrolysis of N-succinyl-L,L-diaminopimelic acid (SDAP), forming succinate and LL-2,6-diaminopimelate (DAP), an intermediate involved in the bacterial biosynthesis of lysine and meso-diaminopimelic acid, an essential component of bacterial cell walls. The chain is Succinyl-diaminopimelate desuccinylase from Rhodospirillum centenum (strain ATCC 51521 / SW).